The primary structure comprises 767 residues: Polyribonucleotide nucleotidyltransferase (767 aa).

Residues Asp-488 and Asp-494 each contribute to the Mg(2+) site. The KH domain maps to 555–614; sequence PRLYTMKINPEKIRDVIGKGGSVIRALTEETGCQIDIGEDGTITIASTDADKAELAKKRI. The S1 motif domain maps to 624-692; the sequence is GKVYEGPVVK…EKGRIKLSMK (69 aa). The span at 700 to 742 shows a compositional bias: basic and acidic residues; the sequence is GMEFEERAPRREGGFGDRGDRGDRGPRRDRGGDRPERGERPAR. The disordered stretch occupies residues 700–767; sequence GMEFEERAPR…QPQQQQGQQQ (68 aa). The segment covering 752–767 has biased composition (low complexity); sequence GAPAAGQPQQQQGQQQ.

This sequence belongs to the polyribonucleotide nucleotidyltransferase family. The cofactor is Mg(2+).

The protein resides in the cytoplasm. The catalysed reaction is RNA(n+1) + phosphate = RNA(n) + a ribonucleoside 5'-diphosphate. Its function is as follows. Involved in mRNA degradation. Catalyzes the phosphorolysis of single-stranded polyribonucleotides processively in the 3'- to 5'-direction. The sequence is that of Polyribonucleotide nucleotidyltransferase from Leptothrix cholodnii (strain ATCC 51168 / LMG 8142 / SP-6) (Leptothrix discophora (strain SP-6)).